We begin with the raw amino-acid sequence, 229 residues long: Heptahelical transmembrane protein ADIPOR2 (229 aa).

Residues 1–4 (MQGA) are Cytoplasmic-facing. A helical transmembrane segment spans residues 5-25 (ASHDAAAAAAAAAVLGGGHGV). Residues 26 to 30 (PRWPR) are Extracellular-facing. A helical membrane pass occupies residues 31–51 (MVFLVGAMTCLAISATAHLLA). Over 52–66 (CHSRRASVVFWQLDY) the chain is Cytoplasmic. The helical transmembrane segment at 67–87 (AGISAMIVASFVPPVYYAFLC) threads the bilayer. Topologically, residues 88–92 (HRPAR) are extracellular. A helical transmembrane segment spans residues 93–113 (VAYLSAISALGALVVGALLSP). At 114-124 (PCSSPRFRRLR) the chain is on the cytoplasmic side. Residues 125–145 (AALFLAMGLSGVVPALHALWL) traverse the membrane as a helical segment. Residues 146–153 (NWGHAACY) are Extracellular-facing. The chain crosses the membrane as a helical span at residues 154–174 (LALSLEVAMGLAYAAGAWFYV). The Cytoplasmic segment spans residues 175–194 (SRVPEKWRPGVFDVVGHSHQ). Residues 195 to 215 (IFHVLVLVGAVTHYVAVDVLL) traverse the membrane as a helical segment. Over 216-229 (NWRETVAAACSATS) the chain is Extracellular.

This sequence belongs to the ADIPOR family.

It is found in the membrane. Functionally, may play a role in abiotic stress response. The sequence is that of Heptahelical transmembrane protein ADIPOR2 (ADIPOR2) from Oryza sativa subsp. japonica (Rice).